The primary structure comprises 521 residues: MGPLGRAWLIAAIFAWALLSARRGLAEEAEASPSPPPSPCPTETESSAGTTGATPPTPNSPDATPEDSTPGATTPVGTPEPPSVSEHDPPVTNSTPPPAPPEDGRPGGAGNASRDGRPSGGGRPRPPRPSKAPPKERKWMLCEREAVAASYAEPLYVHCGVADNATGGARLELWFQRVGRFRSTRGDDEAVRNPFPRAPPVLLFVAQNGSIAYRSAELGDNYIFPSPADPRNLPLTVRSLTAATEGVYTWRRDMGTKSQRKVVTVTTHRAPAVSVEPQPALEGAGYAAVCRAAEYYPPRSTRLHWFRNGYPVEARHARDVFTVDDSGLFSRTSVLTLEDATPTAHPPNLRCDVSWFQSANMERRFYAAGTPAVYRPPELRVYFEGGEAVCEARCVPEGRVSLRWTVRDGIAPSRTEQTGVCAERPGLVNLRGVRLLSTTDGPVDYTCTATGYPAPLPEFSATATYDASPGLIGSPVLVSVVAVACGLGAVGLLLVAASCLRRKARVIQPGLTRARALGSAP.

An N-terminal signal peptide occupies residues 1–21 (MGPLGRAWLIAAIFAWALLSA). At 22–475 (RRGLAEEAEA…DASPGLIGSP (454 aa)) the chain is on the virion surface side. The segment at 24-138 (GLAEEAEASP…PSKAPPKERK (115 aa)) is disordered. Residues 41–54 (PTETESSAGTTGAT) are compositionally biased toward low complexity. The span at 66–76 (EDSTPGATTPV) shows a compositional bias: polar residues. N111 carries N-linked (GlcNAc...) asparagine; by host glycosylation. C142 and C159 form a disulfide bridge. Positions 155 to 227 (LYVHCGVADN…LGDNYIFPSP (73 aa)) constitute an Ig-like V-type domain. N-linked (GlcNAc...) asparagine; by host glycosylation is found at N164 and N208. 3 disulfide bridges follow: C290/C351, C390/C447, and C394/C421. The Ig-like C2-type domain occupies 386-451 (GEAVCEARCV…PVDYTCTATG (66 aa)). A helical transmembrane segment spans residues 476 to 496 (VLVSVVAVACGLGAVGLLLVA). Residues 497–521 (ASCLRRKARVIQPGLTRARALGSAP) are Cytoplasmic-facing.

Belongs to the herpesviridae glycoprotein C family. In terms of assembly, interacts with host complement component C3; this interaction inhibits host immune response by disregulating complement cascade.

It is found in the virion membrane. Functionally, essential for the initial attachment to heparan sulfate moieties of the host cell surface proteoglycans. Plays also a role in host immune evasion by inhibiting the host complement cascade activation. This Bovine herpesvirus 1.1 (strain Cooper) (BoHV-1) protein is Envelope glycoprotein C homolog (gC).